A 206-amino-acid chain; its full sequence is Ras-related protein Ral-B (206 aa).

21–29 (GSGGVGKSA) serves as a coordination point for GTP. Residues 43-51 (YEPTKADSY) carry the Effector region motif. GTP is bound by residues 68–72 (DTAGQ), 128–131 (NKSD), and 158–160 (SAK). The segment covering 180 to 189 (KMSENKDKNG) has biased composition (basic and acidic residues). The disordered stretch occupies residues 180–206 (KMSENKDKNGKKSGKNKKSFKERCCLL). Cys203 is modified (cysteine methyl ester). Cys203 carries S-geranylgeranyl cysteine lipidation. The propeptide at 204–206 (CLL) is removed in mature form.

Belongs to the small GTPase superfamily. Ras family. As to quaternary structure, interacts with EXOC2/Sec5 and EXOC8/Exo84. Interacts (via effector domain) with RALBP1. Prenylation is essential for membrane localization. In terms of processing, the farnesylated form confers resistance to the proapoptotic and anti-anchorage-dependent growth effects of some geranylgeranyltransferase I inhibitors.

Its subcellular location is the cell membrane. The protein resides in the midbody. The catalysed reaction is GTP + H2O = GDP + phosphate + H(+). Alternates between an inactive form bound to GDP and an active form bound to GTP. Activated by a guanine nucleotide-exchange factor (GEF) and inactivated by a GTPase-activating protein (GAP). Its function is as follows. Multifunctional GTPase involved in a variety of cellular processes including gene expression, cell migration, cell proliferation, oncogenic transformation and membrane trafficking. Accomplishes its multiple functions by interacting with distinct downstream effectors. Acts as a GTP sensor for GTP-dependent exocytosis of dense core vesicles. Required both to stabilize the assembly of the exocyst complex and to localize functional exocyst complexes to the leading edge of migrating cells. Required for suppression of apoptosis. In late stages of cytokinesis, upon completion of the bridge formation between dividing cells, mediates exocyst recruitment to the midbody to drive abscission. Involved in ligand-dependent receptor mediated endocytosis of the EGF and insulin receptors. The chain is Ras-related protein Ral-B (RALB) from Macaca fascicularis (Crab-eating macaque).